Here is a 631-residue protein sequence, read N- to C-terminus: 1-deoxy-D-xylulose-5-phosphate synthase (631 aa).

A disordered region spans residues 1-21 (MPTTFHEIPRERPLTPLLDSA). Thiamine diphosphate-binding positions include H87 and 128-130 (GHS). D159 serves as a coordination point for Mg(2+). Thiamine diphosphate contacts are provided by residues 160–161 (GA), N188, F295, and E377. Residue N188 coordinates Mg(2+).

Belongs to the transketolase family. DXPS subfamily. Homodimer. The cofactor is Mg(2+). Requires thiamine diphosphate as cofactor.

The enzyme catalyses D-glyceraldehyde 3-phosphate + pyruvate + H(+) = 1-deoxy-D-xylulose 5-phosphate + CO2. It participates in metabolic intermediate biosynthesis; 1-deoxy-D-xylulose 5-phosphate biosynthesis; 1-deoxy-D-xylulose 5-phosphate from D-glyceraldehyde 3-phosphate and pyruvate: step 1/1. Its function is as follows. Catalyzes the acyloin condensation reaction between C atoms 2 and 3 of pyruvate and glyceraldehyde 3-phosphate to yield 1-deoxy-D-xylulose-5-phosphate (DXP). This Ectopseudomonas mendocina (strain ymp) (Pseudomonas mendocina) protein is 1-deoxy-D-xylulose-5-phosphate synthase.